Consider the following 472-residue polypeptide: Glutamine synthetase (472 aa).

One can recognise a GS beta-grasp domain in the interval 17-101 (YDIKFVLLRF…LRCSIYEPST (85 aa)). Residues 109–472 (PRSIAIRAEN…HPVEFEMYYA (364 aa)) form the GS catalytic domain. Residues Glu134 and Glu136 each contribute to the Mg(2+) site. Glu212 serves as a coordination point for ATP. Residues Glu217 and Glu225 each coordinate Mg(2+). Residues 269–270 (NG) and Gly270 each bind L-glutamate. Residue His274 participates in Mg(2+) binding. ATP-binding positions include 276 to 278 (NMS) and Ser278. Residues Arg326, Glu332, and Arg344 each coordinate L-glutamate. Residues Arg344, Arg349, and Lys357 each contribute to the ATP site. A Mg(2+)-binding site is contributed by Glu362. Arg364 provides a ligand contact to L-glutamate. O-AMP-tyrosine is present on Tyr402.

The protein belongs to the glutamine synthetase family. In terms of assembly, oligomer of 12 subunits arranged in the form of two hexameric ring. Requires Mg(2+) as cofactor.

It localises to the cytoplasm. It catalyses the reaction L-glutamate + NH4(+) + ATP = L-glutamine + ADP + phosphate + H(+). With respect to regulation, the activity of this enzyme could be controlled by adenylation under conditions of abundant glutamine. Catalyzes the ATP-dependent biosynthesis of glutamine from glutamate and ammonia. This is Glutamine synthetase from Pasteurella multocida (strain Pm70).